Consider the following 383-residue polypeptide: Homoserine O-succinyltransferase (383 aa).

Residues 51–360 (NAILLCHALS…EAEHGHDSFL (310 aa)) enclose the AB hydrolase-1 domain. The active-site Nucleophile is serine 157. Arginine 227 lines the substrate pocket. Catalysis depends on residues aspartate 323 and histidine 356. Residue aspartate 357 coordinates substrate.

This sequence belongs to the AB hydrolase superfamily. MetX family. Homodimer.

The protein localises to the cytoplasm. The catalysed reaction is L-homoserine + succinyl-CoA = O-succinyl-L-homoserine + CoA. It functions in the pathway amino-acid biosynthesis; L-methionine biosynthesis via de novo pathway; O-succinyl-L-homoserine from L-homoserine: step 1/1. Transfers a succinyl group from succinyl-CoA to L-homoserine, forming succinyl-L-homoserine. The protein is Homoserine O-succinyltransferase of Acidithiobacillus ferrooxidans (strain ATCC 23270 / DSM 14882 / CIP 104768 / NCIMB 8455) (Ferrobacillus ferrooxidans (strain ATCC 23270)).